We begin with the raw amino-acid sequence, 265 residues long: uncharacterized protein (265 aa).

Disordered regions lie at residues 162-183 (VTKK…NNDQ) and 196-239 (AKTN…DKEI). Polar residues-rich tracts occupy residues 165–183 (KNAS…NNDQ) and 213–233 (QSTS…GNAS).

It belongs to the MG185/MG260 family.

This is an uncharacterized protein from Mycoplasma pneumoniae (strain ATCC 29342 / M129 / Subtype 1) (Mycoplasmoides pneumoniae).